The sequence spans 324 residues: IDS-like terpene synthase 2 (324 aa).

D77 and D81 together coordinate Mg(2+).

The protein belongs to the FPP/GGPP synthase family. It depends on Mg(2+) as a cofactor.

The enzyme catalyses (2E)-geranyl diphosphate = (E)-beta-ocimene + diphosphate. The catalysed reaction is (2E,6E)-farnesyl diphosphate = (3E,6E)-alpha-farnesene + diphosphate. It carries out the reaction (2E,6E,10E)-geranylgeranyl diphosphate = (E,E,E)-alpha-springene + diphosphate. Terpene synthase that shows monoterpene synthase activity and produces (E)-beta-ocimene as a major product, using geranyl diphosphate (GPP) as substrate. Also shows sesquiterpene synthase activity as it is able to convert farnesyl diphosphate (FPP) into (E,E)-alpha-farnesene. Finally, TPS2 can convert geranylgeranyl diphosphate into (E,E,E)-alpha-springene. The polypeptide is IDS-like terpene synthase 2 (Melampsora lini (Rust fungus)).